Here is a 176-residue protein sequence, read N- to C-terminus: Co-chaperone protein HscB (176 aa).

A J domain is found at 2-74 (DYFTLFGLPA…LMRAEYLLSL (73 aa)).

The protein belongs to the HscB family. As to quaternary structure, interacts with HscA and stimulates its ATPase activity. Interacts with IscU.

Functionally, co-chaperone involved in the maturation of iron-sulfur cluster-containing proteins. Seems to help targeting proteins to be folded toward HscA. This Escherichia coli O7:K1 (strain IAI39 / ExPEC) protein is Co-chaperone protein HscB.